The primary structure comprises 103 residues: Cysteine-rich and transmembrane domain-containing protein 1 (103 aa).

Positions 1–45 (MNQGNPPPYPGPGPTAPYPPYPSQPMGPGFYPPGPPGGPYPPPQG) are enriched in pro residues. The disordered stretch occupies residues 1–66 (MNQGNPPPYP…WQGGPQEPPK (66 aa)). The span at 46-56 (GYPYQGYPQYG) shows a compositional bias: low complexity. Residues 80-97 (LGTSTCLTACWTALCCCC) form a helical membrane-spanning segment.

The protein belongs to the CYSTM1 family.

It localises to the membrane. The chain is Cysteine-rich and transmembrane domain-containing protein 1 (CYSTM1) from Bos taurus (Bovine).